Here is a 114-residue protein sequence, read N- to C-terminus: T cell receptor beta variable 25-1 (114 aa).

Residues 1–21 form the signal peptide; the sequence is MTIRLLCYVGFYFLGAGLMEA. Positions 22–114 constitute an Ig-like domain; the sequence is DIYQTPRYLV…TSQYLCASSE (93 aa). A disulfide bond links Cys42 and Cys110. N-linked (GlcNAc...) asparagine glycosylation occurs at Asn72.

Alpha-beta TR is a heterodimer composed of an alpha and beta chain; disulfide-linked. The alpha-beta TR is associated with the transmembrane signaling CD3 coreceptor proteins to form the TR-CD3 (TcR or TCR). The assembly of alpha-beta TR heterodimers with CD3 occurs in the endoplasmic reticulum where a single alpha-beta TR heterodimer associates with one CD3D-CD3E heterodimer, one CD3G-CD3E heterodimer and one CD247 homodimer forming a stable octameric structure. CD3D-CD3E and CD3G-CD3E heterodimers preferentially associate with TR alpha and TR beta chains, respectively. The association of the CD247 homodimer is the last step of TcR assembly in the endoplasmic reticulum and is required for transport to the cell surface.

Its subcellular location is the cell membrane. Its function is as follows. V region of the variable domain of T cell receptor (TR) beta chain that participates in the antigen recognition. Alpha-beta T cell receptors are antigen specific receptors which are essential to the immune response and are present on the cell surface of T lymphocytes. Recognize peptide-major histocompatibility (MH) (pMH) complexes that are displayed by antigen presenting cells (APC), a prerequisite for efficient T cell adaptive immunity against pathogens. Binding of alpha-beta TR to pMH complex initiates TR-CD3 clustering on the cell surface and intracellular activation of LCK that phosphorylates the ITAM motifs of CD3G, CD3D, CD3E and CD247 enabling the recruitment of ZAP70. In turn ZAP70 phosphorylates LAT, which recruits numerous signaling molecules to form the LAT signalosome. The LAT signalosome propagates signal branching to three major signaling pathways, the calcium, the mitogen-activated protein kinase (MAPK) kinase and the nuclear factor NF-kappa-B (NF-kB) pathways, leading to the mobilization of transcription factors that are critical for gene expression and essential for T cell growth and differentiation. The T cell repertoire is generated in the thymus, by V-(D)-J rearrangement. This repertoire is then shaped by intrathymic selection events to generate a peripheral T cell pool of self-MH restricted, non-autoaggressive T cells. Post-thymic interaction of alpha-beta TR with the pMH complexes shapes TR structural and functional avidity. This Homo sapiens (Human) protein is T cell receptor beta variable 25-1.